A 498-amino-acid chain; its full sequence is Cytotardin (498 aa).

Residues 18–58 (DRVHSKDELQALNTRLAKYIDKIRNLENENVALQRQLQTAE) are coil 1A. The 357-residue stretch at 22–378 (SKDELQALNT…KLLSGEEQRL (357 aa)) folds into the IF rod domain. The linker 1 stretch occupies residues 59 to 69 (QTTVTEIHRVS). The coil 1B stretch occupies residues 70-213 (KNYDEELAKL…ENLREEKSQR (144 aa)). The segment at 214–231 (QYLLHDLQRGLQDEFESK) is linker 2. The interval 232-371 (LVQQLNELRA…AELATYNKLL (140 aa)) is coil 2. Residues 381–425 (DGSGTVIRRPTGGATGTGSGIYGGTGSGGYSRDIGSTTTTKTTYT) are disordered. Positions 393 to 409 (GATGTGSGIYGGTGSGG) are enriched in gly residues.

The protein belongs to the intermediate filament family.

The protein localises to the cytoplasm. Its subcellular location is the cell cortex. Intermediate filament (IF) protein that forms both short filaments and extensive cytoskeletal networks which most likely are homomeric. Some of the cytotardin arrays display cage-like perinuclear structures, while others are located in the periphery close to the cell membrane. The entire tardigrade body is ensheathed by a grid of belt-like filaments formed by the cytotardin protein, which retain their integrity even in contracted specimens. The belt-like structures encircling each epidermal cell might help to resist the shearing forces that arise during freezing and thawing cycles, whereas the dense meshwork at the basis of each claw and around the stylets might provide the tissue stability necessary for locomotion and feeding. In Hypsibius exemplaris (Freshwater tardigrade), this protein is Cytotardin.